A 272-amino-acid polypeptide reads, in one-letter code: MSGCRVFIGRLNPAAREKDVERFFKGYGRIRDIDLKRGFGFVEFEDPRDADDAVYELDGKELCSERVTIEHARARSRGGRGRGRYSDRFSSRRPRNDRRNAPPVRTENRLIVENLSSRVSWQDLKDFMRQAGEVTFADAHRPKLNEGVVEFASYGDLKNAIEKLSGKEINGRKIKLIEGSKRHSRSRSRSRSRTRSSSRSRSRSRSRSRKSYSRSRSRSRSRSRSKSRSVSRSPVPEKSQKRGSSSRSKSPASVDRQRSRSRSRSRSVDSGN.

The RRM 1 domain maps to 4–74 (CRVFIGRLNP…ERVTIEHARA (71 aa)). The tract at residues 73-105 (RARSRGGRGRGRYSDRFSSRRPRNDRRNAPPVR) is disordered. Residues 74–83 (ARSRGGRGRG) show a composition bias toward basic residues. Residue Ser86 is modified to Phosphoserine. Positions 108 to 181 (NRLIVENLSS…RKIKLIEGSK (74 aa)) constitute an RRM 2 domain. Position 167 is an N6-acetyllysine (Lys167). Residues 174–272 (IKLIEGSKRH…SRSRSVDSGN (99 aa)) form a disordered region. A compositionally biased stretch (basic residues) spans 182–229 (RHSRSRSRSRSRTRSSSRSRSRSRSRSRKSYSRSRSRSRSRSRSKSRS). A phosphoserine mark is found at Ser227, Ser229, Ser233, Ser250, and Ser253. Low complexity predominate over residues 242–254 (RGSSSRSKSPASV).

It belongs to the splicing factor SR family. Interacts (via RS domain) with PHF5A (via N-terminus). Found in a pre-mRNA splicing complex with SRSF4/SFRS4, SRSF5/SFRS5, SNRNP70, SNRPA1, SRRM1 and SRRM2. In terms of processing, extensively phosphorylated on serine residues in the RS domain.

The protein localises to the nucleus. Functionally, plays a role in constitutive splicing and can modulate the selection of alternative splice sites. The chain is Serine/arginine-rich splicing factor 5 (SRSF5) from Homo sapiens (Human).